The sequence spans 259 residues: Ribonuclease HII (259 aa).

The 189-residue stretch at 70–258 (TLIAGIDEVG…VKSLVLGKKE (189 aa)) folds into the RNase H type-2 domain. Residues Asp-76, Glu-77, and Asp-168 each contribute to the a divalent metal cation site.

This sequence belongs to the RNase HII family. It depends on Mn(2+) as a cofactor. Mg(2+) is required as a cofactor.

It localises to the cytoplasm. The catalysed reaction is Endonucleolytic cleavage to 5'-phosphomonoester.. In terms of biological role, endonuclease that specifically degrades the RNA of RNA-DNA hybrids. This is Ribonuclease HII from Streptococcus pneumoniae serotype 19F (strain G54).